A 269-amino-acid chain; its full sequence is Tryptophan synthase alpha chain (269 aa).

Catalysis depends on proton acceptor residues Glu-56 and Asp-67.

Belongs to the TrpA family. Tetramer of two alpha and two beta chains.

The catalysed reaction is (1S,2R)-1-C-(indol-3-yl)glycerol 3-phosphate + L-serine = D-glyceraldehyde 3-phosphate + L-tryptophan + H2O. It functions in the pathway amino-acid biosynthesis; L-tryptophan biosynthesis; L-tryptophan from chorismate: step 5/5. In terms of biological role, the alpha subunit is responsible for the aldol cleavage of indoleglycerol phosphate to indole and glyceraldehyde 3-phosphate. The polypeptide is Tryptophan synthase alpha chain (Mycobacterium marinum (strain ATCC BAA-535 / M)).